The following is a 352-amino-acid chain: Ferrochelatase (352 aa).

Positions 222 and 303 each coordinate Fe cation.

The protein belongs to the ferrochelatase family.

The protein localises to the cytoplasm. It carries out the reaction heme b + 2 H(+) = protoporphyrin IX + Fe(2+). Its pathway is porphyrin-containing compound metabolism; protoheme biosynthesis; protoheme from protoporphyrin-IX: step 1/1. Catalyzes the ferrous insertion into protoporphyrin IX. This Brucella abortus (strain S19) protein is Ferrochelatase.